The sequence spans 333 residues: Na(+)/H(+) exchange regulatory cofactor NHE-RF1 (333 aa).

The PDZ 1 domain maps to 13–93; that stretch reads LCCMEKGPDG…AVRLLVVQPQ (81 aa). Disordered regions lie at residues 90–164 and 232–333; these read VQPQ…RAVD and LAGP…FSNL. Positions 97 to 111 are enriched in basic and acidic residues; that stretch reads QPPKTHSDPDGEAQR. The span at 112 to 122 shows a compositional bias: low complexity; sequence EPPAAETPAAE. The segment covering 124–133 has biased composition (basic and acidic residues); it reads SGPEERELRP. The PDZ 2 domain maps to 135 to 215; it reads LCRIKKGPNG…ETKLLVVGVL (81 aa). 2 stretches are compositionally biased toward basic and acidic residues: residues 274-289 and 323-333; these read SETHSEPDTQEGDKRS and WSKKNELFSNL.

The protein localises to the endomembrane system. It is found in the cell projection. Its subcellular location is the filopodium. It localises to the ruffle. The protein resides in the microvillus. Its function is as follows. Scaffold protein that connects plasma membrane proteins with members of the ezrin/moesin/radixin family and thereby helps to link them to the actin cytoskeleton and to regulate their surface expression. Was first known to play a role in the regulation of the activity and subcellular location of SLC9A3. May enhance Wnt signaling. This is Na(+)/H(+) exchange regulatory cofactor NHE-RF1 (NHERF1) from Gallus gallus (Chicken).